Reading from the N-terminus, the 188-residue chain is dCTP deaminase (188 aa).

DCTP-binding positions include 111–116 (KSTYAR), 135–137 (TLE), Gln-156, Tyr-170, and Gln-180. The Proton donor/acceptor role is filled by Glu-137.

The protein belongs to the dCTP deaminase family. In terms of assembly, homotrimer.

It catalyses the reaction dCTP + H2O + H(+) = dUTP + NH4(+). The protein operates within pyrimidine metabolism; dUMP biosynthesis; dUMP from dCTP (dUTP route): step 1/2. Catalyzes the deamination of dCTP to dUTP. This chain is dCTP deaminase, found in Polaromonas sp. (strain JS666 / ATCC BAA-500).